Here is a 304-residue protein sequence, read N- to C-terminus: MRKQKMNRDWIATARTLSEALPYMQRYSGAVVVVKFGGNAMGDDEAMAEFARDIVLMKQVGIHPVVCHGGGPMINDLLGKLGIESRFVRGKRVTTRETVEVVEMVLSGLVNKRIVQAINDAGGRAVGISGKDDDLMVCEPDDPELGFVGRPVEMNVQIIRDLYNAGLIPVIAPVATGMEDNETFNVNGDTAAGAIAGALRADRLLLLTDVAGVKDASGEVLTAMHPDQVRAMIADGTIAGGMIPKTETALKALDEGVRAVVILDGRVPNACLLELFTEHGAGSLIRSTEPRVKPRGLRQGDSGL.

Residues 70 to 71 (GG), Arg92, and Asn185 each bind substrate.

This sequence belongs to the acetylglutamate kinase family. ArgB subfamily.

Its subcellular location is the cytoplasm. It catalyses the reaction N-acetyl-L-glutamate + ATP = N-acetyl-L-glutamyl 5-phosphate + ADP. It participates in amino-acid biosynthesis; L-arginine biosynthesis; N(2)-acetyl-L-ornithine from L-glutamate: step 2/4. Its function is as follows. Catalyzes the ATP-dependent phosphorylation of N-acetyl-L-glutamate. This chain is Acetylglutamate kinase, found in Paracoccus denitrificans (strain Pd 1222).